Consider the following 144-residue polypeptide: Snaclec trimecetin subunit beta (144 aa).

The signal sequence occupies residues 1–23 (MGRFIFVSFGLLVVFLSLSGTAA). Cystine bridges form between Cys25–Cys36, Cys53–Cys142, and Cys119–Cys134. The 112-residue stretch at 32–143 (FRRYCYQVFQ…CSSKRYVVCK (112 aa)) folds into the C-type lectin domain.

This sequence belongs to the snaclec family. As to quaternary structure, heterodimer of subunits alpha and beta; disulfide-linked. Expressed by the venom gland.

It is found in the secreted. In terms of biological role, snaclec that induces platelet aggregation in either human platelet rich plasma (PRP) or washed platelet suspensions. It causes aggregation in a dose-dependent manner even in the absence of various platelet agonists such as ADP or von Willebrand factor (vWF). Interestingly, it does not induce aggregation in rabbit PRP. A monoclonal antibody against the platelet GPIb receptor blocks the aggregation induced by trimecetin, suggesting that it acts by binding to GPIb (GP1BA/GP1BB). This Protobothrops mucrosquamatus (Taiwan habu) protein is Snaclec trimecetin subunit beta.